Reading from the N-terminus, the 163-residue chain is Putative C-type lectin protein FPV239 (163 aa).

Positions 48-159 constitute a C-type lectin domain; it reads CKEGWVGYNK…CFLPKKWICR (112 aa). 2 disulfide bridges follow: Cys-76-Cys-158 and Cys-137-Cys-150.

This Fowlpox virus (strain NVSL) (FPV) protein is Putative C-type lectin protein FPV239.